Reading from the N-terminus, the 590-residue chain is Laccase-19 (590 aa).

Positions 1–28 (MEKLSMVTSLLCAITVAVLAVAVVSGEA) are cleaved as a signal peptide. Plastocyanin-like domains follow at residues 36-152 (VVHE…PRDG) and 161-315 (KDVP…YAGT). N-linked (GlcNAc...) asparagine glycans are attached at residues N41 and N47. Cu cation is bound by residues H86 and H88. N120 carries an N-linked (GlcNAc...) asparagine glycan. Positions 131 and 133 each coordinate Cu cation. Residues N205, N344, N378, N397, N434, and N465 are each glycosylated (N-linked (GlcNAc...) asparagine). The region spanning 424–566 (DFPIRPPRPF…ATAFIVEDGP (143 aa)) is the Plastocyanin-like 3 domain. Cu cation-binding residues include N483, H486, H488, H545, C546, H547, H551, and M556. Positions 565–590 (GPTPETSLPPPPPEFKRCGNNGLSQP) are disordered.

Belongs to the multicopper oxidase family. Cu cation is required as a cofactor.

It localises to the secreted. The protein localises to the extracellular space. It is found in the apoplast. It carries out the reaction 4 hydroquinone + O2 = 4 benzosemiquinone + 2 H2O. In terms of biological role, lignin degradation and detoxification of lignin-derived products. This is Laccase-19 (LAC19) from Oryza sativa subsp. japonica (Rice).